We begin with the raw amino-acid sequence, 205 residues long: MSKRIQAKHKLDRRMGQNIWGRPKSPVNRREYGPGQHGQRRKGKLSDFGTQLRAKQKLKGYYANITEKQFRRYYAEAIRLRGDSGENLIGLLERRLDAVIYRAKFVATPFAARQFVNHGHIKVNGQRVNIPSFLVKPGDVIEVKESSKQLEIVVVASQLAERDVPDYIEVDHGKMTARFTRVPTLSEVPYPVHMEPNQVIEFYSR.

Basic residues predominate over residues 1 to 12; sequence MSKRIQAKHKLD. A disordered region spans residues 1–49; it reads MSKRIQAKHKLDRRMGQNIWGRPKSPVNRREYGPGQHGQRRKGKLSDFG. The region spanning 94 to 156 is the S4 RNA-binding domain; it reads RRLDAVIYRA…SKQLEIVVVA (63 aa).

It belongs to the universal ribosomal protein uS4 family. In terms of assembly, part of the 30S ribosomal subunit. Contacts protein S5. The interaction surface between S4 and S5 is involved in control of translational fidelity.

Functionally, one of the primary rRNA binding proteins, it binds directly to 16S rRNA where it nucleates assembly of the body of the 30S subunit. Its function is as follows. With S5 and S12 plays an important role in translational accuracy. The polypeptide is Small ribosomal subunit protein uS4 (Methylobacterium nodulans (strain LMG 21967 / CNCM I-2342 / ORS 2060)).